We begin with the raw amino-acid sequence, 683 residues long: Dixin (683 aa).

A lipid anchor (N-myristoyl glycine) is attached at leucine 2. Residues 20-127 (EQQLQAYVAW…LVLALAAHFK (108 aa)) form the Calponin-homology (CH) domain. The interval 127–300 (KPGSSRTVNQ…LEKEMEEAKK (174 aa)) is actin-binding. Position 186 is a phosphoserine (serine 186). The interval 207-235 (GQQRSPSESSCSSLTSPSPIHSAKSESII) is disordered. Residues 211–228 (SPSESSCSSLTSPSPIHS) are compositionally biased toward low complexity. A Phosphoserine modification is found at serine 231. The stretch at 279–452 (SWEEQLLEQQ…EALRKLSDVS (174 aa)) forms a coiled coil. Polar residues predominate over residues 482–492 (NYNSHNSQSNG). Disordered regions lie at residues 482–509 (NYNS…SNRG) and 556–594 (TQKK…QSSP). Serine 590 carries the post-translational modification Phosphoserine. Positions 600-680 (CTKVLYFTDR…KIVAWVEEDH (81 aa)) constitute a DIX domain.

The protein belongs to the DIXDC1 family. Isoform 1 but not isoform 2 binds filamentous actin. Interacts with the complex composed of DVL2 and Rac. Interacts with AXIN1; competes with MAP3K1. Interacts with MAP3K4 preventing MAP3K4 interaction with AXIN1. Directly interacts (via DIX domain) with DVL2 (via DIX domain). Interacts with gamma-tubulin. Phosphorylated on tyrosine and serine residues. Post-translationally, polyubiquitinated, leading to its proteasomal degradation. WNT3A signaling increases DIXDC1 protein levels by inhibiting its ubiquitination and subsequent degradation. As to expression, ubiquitously expressed with higher expression in cardiac and skeletal muscles.

The protein localises to the cell junction. The protein resides in the focal adhesion. It localises to the cytoplasm. Its subcellular location is the cytoskeleton. It is found in the stress fiber. Functionally, positive effector of the Wnt signaling pathway; activates WNT3A signaling via DVL2. Regulates JNK activation by AXIN1 and DVL2. This Homo sapiens (Human) protein is Dixin (DIXDC1).